Reading from the N-terminus, the 192-residue chain is NOP protein chaperone 1 (192 aa).

The span at 1 to 26 (MEVSGESHSGPSCSSSSRDGSGVSVS) shows a compositional bias: low complexity. The tract at residues 1 to 39 (MEVSGESHSGPSCSSSSRDGSGVSVSKELLMAGSGGRGG) is disordered. Phosphoserine is present on residues S34 and S66. The disordered stretch occupies residues 118–192 (FEMNQSHSKE…SENKEKQENK (75 aa)). A compositionally biased stretch (acidic residues) spans 129–152 (DSSEENSQDSSEESSESEDEDDST). Over residues 164–177 (KLPHSEDGKGKIEV) the composition is skewed to basic and acidic residues. Residue S180 is modified to Phosphoserine.

In terms of assembly, interacts with NOP58, RUVBL1 and RUVBL2; the interactions are direct and NOPCHAP1 bridges the association of NOP58 with RUVBL1:RUVBL2 even in absence of snoRNAs. The interactions with RUVBL1 and RUVBL2 are disrupted upon ATP binding.

The protein resides in the nucleus. Its function is as follows. Client-loading PAQosome/R2TP complex cofactor that selects NOP58 to promote box C/D small nucleolar ribonucleoprotein (snoRNP) assembly. Acts as a bridge between NOP58 and the R2TP complex via RUVBL1:RUVBL2. The polypeptide is NOP protein chaperone 1 (NOPCHAP1) (Bos taurus (Bovine)).